Reading from the N-terminus, the 448-residue chain is C4-dicarboxylate transport protein (448 aa).

The next 9 helical transmembrane spans lie at 13–33 (SLYA…HFYP), 49–69 (LIKM…IAGM), 81–101 (LALL…LLVV), 149–169 (AFAK…GFAL), 193–213 (IVGI…AFTI), 227–247 (LMGA…GIVS), 294–314 (VVGL…SIYL), 336–356 (TLLA…GSGF), and 357–377 (IVLA…LALI).

Belongs to the dicarboxylate/amino acid:cation symporter (DAACS) (TC 2.A.23) family.

It localises to the cell inner membrane. In terms of biological role, responsible for the transport of dicarboxylates such as succinate, fumarate, and malate from the periplasm across the membrane. The chain is C4-dicarboxylate transport protein from Albidiferax ferrireducens (strain ATCC BAA-621 / DSM 15236 / T118) (Rhodoferax ferrireducens).